The primary structure comprises 241 residues: MSDNEKETQVAEETQNTQAAAESNNEDRKSRRGQRGEGRRGERRNRREESHENEMLDRVVTINRVSKTHKGGRTFSFAALVVVGDGKGTVGVGYGKSREVPAAIAKGQLDAKKHMFTVPRIKGTVTHPVIGHDAAGTVLLRPAAPGTGVIAGGAVRAVMECAGITDVLTKSMGSATAVNVVRATVDALKKLEEPEEIAARRGMSLEEVAPDALLRARAEGIAEARKAREEAQAKAAQKDGE.

The tract at residues 1-53 (MSDNEKETQVAEETQNTQAAAESNNEDRKSRRGQRGEGRRGERRNRREESHEN) is disordered. The segment covering 11 to 22 (AEETQNTQAAAE) has biased composition (low complexity). Residues 25-53 (NEDRKSRRGQRGEGRRGERRNRREESHEN) show a composition bias toward basic and acidic residues. One can recognise an S5 DRBM domain in the interval 55 to 118 (MLDRVVTINR…LDAKKHMFTV (64 aa)).

Belongs to the universal ribosomal protein uS5 family. As to quaternary structure, part of the 30S ribosomal subunit. Contacts proteins S4 and S8.

Its function is as follows. With S4 and S12 plays an important role in translational accuracy. Functionally, located at the back of the 30S subunit body where it stabilizes the conformation of the head with respect to the body. The polypeptide is Small ribosomal subunit protein uS5 (Bifidobacterium adolescentis (strain ATCC 15703 / DSM 20083 / NCTC 11814 / E194a)).